A 476-amino-acid chain; its full sequence is uncharacterized protein (476 aa).

In terms of domain architecture, LisH spans 7–39 (SRFYTNLLIANYLKHNGLEDTLAAFIRETALPL).

This is an uncharacterized protein from Saccharomyces cerevisiae (strain ATCC 204508 / S288c) (Baker's yeast).